The chain runs to 269 residues: Ubiquinone/menaquinone biosynthesis C-methyltransferase UbiE (269 aa).

S-adenosyl-L-methionine contacts are provided by residues Thr92, Asp113, and 141–142 (NA).

This sequence belongs to the class I-like SAM-binding methyltransferase superfamily. MenG/UbiE family.

The catalysed reaction is a 2-demethylmenaquinol + S-adenosyl-L-methionine = a menaquinol + S-adenosyl-L-homocysteine + H(+). It catalyses the reaction a 2-methoxy-6-(all-trans-polyprenyl)benzene-1,4-diol + S-adenosyl-L-methionine = a 5-methoxy-2-methyl-3-(all-trans-polyprenyl)benzene-1,4-diol + S-adenosyl-L-homocysteine + H(+). It functions in the pathway quinol/quinone metabolism; menaquinone biosynthesis; menaquinol from 1,4-dihydroxy-2-naphthoate: step 2/2. The protein operates within cofactor biosynthesis; ubiquinone biosynthesis. Methyltransferase required for the conversion of demethylmenaquinol (DMKH2) to menaquinol (MKH2) and the conversion of 2-polyprenyl-6-methoxy-1,4-benzoquinol (DDMQH2) to 2-polyprenyl-3-methyl-6-methoxy-1,4-benzoquinol (DMQH2). This Brucella melitensis biotype 2 (strain ATCC 23457) protein is Ubiquinone/menaquinone biosynthesis C-methyltransferase UbiE.